The chain runs to 201 residues: Cytochrome c4 (201 aa).

Positions Met1–Ala20 are cleaved as a signal peptide. 8 residues coordinate heme c: Cys34, Cys37, His38, Met77, Cys130, Cys133, His134, and Met178.

In terms of processing, binds 2 heme c groups covalently per subunit.

It is found in the periplasm. Its function is as follows. Diheme, high potential cytochrome c believed to be an intermediate electron donor to terminal oxidation systems. The chain is Cytochrome c4 (cc4) from Pseudomonas aeruginosa (strain ATCC 15692 / DSM 22644 / CIP 104116 / JCM 14847 / LMG 12228 / 1C / PRS 101 / PAO1).